Reading from the N-terminus, the 243-residue chain is 1-(5-phosphoribosyl)-5-[(5-phosphoribosylamino)methylideneamino] imidazole-4-carboxamide isomerase (243 aa).

Aspartate 17 serves as the catalytic Proton acceptor. Aspartate 138 functions as the Proton donor in the catalytic mechanism.

It belongs to the HisA/HisF family.

The protein localises to the cytoplasm. It catalyses the reaction 1-(5-phospho-beta-D-ribosyl)-5-[(5-phospho-beta-D-ribosylamino)methylideneamino]imidazole-4-carboxamide = 5-[(5-phospho-1-deoxy-D-ribulos-1-ylimino)methylamino]-1-(5-phospho-beta-D-ribosyl)imidazole-4-carboxamide. The protein operates within amino-acid biosynthesis; L-histidine biosynthesis; L-histidine from 5-phospho-alpha-D-ribose 1-diphosphate: step 4/9. This chain is 1-(5-phosphoribosyl)-5-[(5-phosphoribosylamino)methylideneamino] imidazole-4-carboxamide isomerase, found in Deinococcus geothermalis (strain DSM 11300 / CIP 105573 / AG-3a).